The chain runs to 420 residues: Dihydrolipoyllysine-residue succinyltransferase component of 2-oxoglutarate dehydrogenase complex (420 aa).

In terms of domain architecture, Lipoyl-binding spans 1–76; that stretch reads MAEVKVPELA…EVGQAVAVVG (76 aa). Lys-42 carries the post-translational modification N6-lipoyllysine. Residues 75-201 are disordered; it reads VGEGQVNTSN…EKMSRRKKTA (127 aa). The span at 81–90 shows a compositional bias: polar residues; it reads NTSNDSSNES. The segment covering 91 to 102 has biased composition (basic and acidic residues); the sequence is SQKDEAKEKETP. Residues 103–127 are compositionally biased toward polar residues; it reads KQSNPNSSESENTQDNSQQRINATP. Positions 124-160 constitute a Peripheral subunit-binding (PSBD) domain; the sequence is NATPSARRHARKNGVDLSEVSGKGNDVLRKDDVENSQ. Basic and acidic residues predominate over residues 149-158; sequence DVLRKDDVEN. Over residues 159-188 the composition is skewed to low complexity; sequence SQKSSSQTAKSESKSQNSGSKQSNNNPSKP. Active-site residues include His-391 and Asp-395.

This sequence belongs to the 2-oxoacid dehydrogenase family. In terms of assembly, forms a 24-polypeptide structural core with octahedral symmetry. Part of the 2-oxoglutarate dehydrogenase (OGDH) complex composed of E1 (2-oxoglutarate dehydrogenase), E2 (dihydrolipoamide succinyltransferase) and E3 (dihydrolipoamide dehydrogenase); the complex contains multiple copies of the three enzymatic components (E1, E2 and E3). (R)-lipoate is required as a cofactor.

The enzyme catalyses N(6)-[(R)-dihydrolipoyl]-L-lysyl-[protein] + succinyl-CoA = N(6)-[(R)-S(8)-succinyldihydrolipoyl]-L-lysyl-[protein] + CoA. It functions in the pathway amino-acid degradation; L-lysine degradation via saccharopine pathway; glutaryl-CoA from L-lysine: step 6/6. Its function is as follows. E2 component of the 2-oxoglutarate dehydrogenase (OGDH) complex which catalyzes the second step in the conversion of 2-oxoglutarate to succinyl-CoA and CO(2). The polypeptide is Dihydrolipoyllysine-residue succinyltransferase component of 2-oxoglutarate dehydrogenase complex (odhB) (Staphylococcus epidermidis (strain ATCC 12228 / FDA PCI 1200)).